We begin with the raw amino-acid sequence, 723 residues long: Tripartite motif-containing protein 42 (723 aa).

The RING-type zinc finger occupies 146–192 (CPMCSRLRLHSFMLPCNHSLCEKCLRQLQKHAEVTENFFILICPVCD). 2 consecutive B box-type zinc fingers follow at residues 235–280 (PILC…FVDT) and 285–326 (QDEK…TISL). Residues Cys290, His293, Cys313, and His318 each contribute to the Zn(2+) site. The stretch at 382–407 (KLRSILQEKEKIIMEQIENLEVSRQK) forms a coiled coil. One can recognise a COS domain in the interval 434–492 (LKETGQVAFLQSAKILVDQIEDGIQTTYRPDPQLRLHSINYVPLDFVELSSAIHELFPT). The 99-residue stretch at 603–701 (TPGPIVIYQT…DICKVVTPDG (99 aa)) folds into the Fibronectin type-III domain.

Belongs to the TRIM/RBCC family.

The protein is Tripartite motif-containing protein 42 (TRIM42) of Homo sapiens (Human).